The sequence spans 652 residues: Probable serine/threonine-protein kinase mkcD (652 aa).

Disordered stretches follow at residues 1–47 (MNNI…RKNK), 163–198 (NPID…LTNV), and 257–289 (QQKL…TLSP). The segment covering 182–191 (NGGGSGGGGD) has biased composition (gly residues). A coiled-coil region spans residues 231–275 (KNNQNLHHKQQQLQQLQQLKQQHLQQQQKLKQEQQQEQQQQQEDE). The span at 257-271 (QQKLKQEQQQEQQQQ) shows a compositional bias: low complexity. The segment covering 279–289 (SPVSTSSTLSP) has biased composition (polar residues). The Protein kinase domain maps to 369–626 (FKNLDFEARG…SSQLLQHPFL (258 aa)). Residues 375–383 (EARGGFGSV) and Lys-403 each bind ATP. Residue Asp-494 is the Proton acceptor of the active site.

Belongs to the protein kinase superfamily. STE Ser/Thr protein kinase family. STE20 subfamily. The cofactor is Mg(2+).

It catalyses the reaction L-seryl-[protein] + ATP = O-phospho-L-seryl-[protein] + ADP + H(+). The enzyme catalyses L-threonyl-[protein] + ATP = O-phospho-L-threonyl-[protein] + ADP + H(+). This Dictyostelium discoideum (Social amoeba) protein is Probable serine/threonine-protein kinase mkcD.